The primary structure comprises 167 residues: NADH-ubiquinone oxidoreductase chain 6 (167 aa).

5 helical membrane-spanning segments follow: residues 1–21 (MVLMVVFSVMFLISLIAVASN), 23–43 (SPYFAAFGLMVGAGVGCGMLM), 47–67 (MTFLSMILFLIYLGGMLVVFA), 86–106 (VFSYVLVYMFLVIVAWVAFVG), and 133–153 (AGGYMLFIAGWVLLMALLVVL).

The protein belongs to the complex I subunit 6 family.

It localises to the mitochondrion membrane. It carries out the reaction a ubiquinone + NADH + 5 H(+)(in) = a ubiquinol + NAD(+) + 4 H(+)(out). Functionally, core subunit of the mitochondrial membrane respiratory chain NADH dehydrogenase (Complex I) that is believed to belong to the minimal assembly required for catalysis. Complex I functions in the transfer of electrons from NADH to the respiratory chain. The immediate electron acceptor for the enzyme is believed to be ubiquinone. The chain is NADH-ubiquinone oxidoreductase chain 6 (MT-ND6) from Polypterus ornatipinnis (Ornate bichir).